A 655-amino-acid polypeptide reads, in one-letter code: Very long-chain specific acyl-CoA dehydrogenase, mitochondrial (655 aa).

A mitochondrion-targeting transit peptide spans 1-40; it reads MQAARMAASLGRQLLRLGGGSSRLTALLGQPRPGPARRPY. The segment at 23 to 42 is disordered; sequence RLTALLGQPRPGPARRPYAG. Positions 41 to 482 are catalytic; sequence AGGAAQLALD…ALQGCMDKGK (442 aa). Lys-51 is subject to N6-acetyllysine. An N6-acetyllysine; alternate modification is found at Lys-71. Lys-71 carries the post-translational modification N6-succinyllysine; alternate. N6-succinyllysine is present on Lys-195. Residue 214–223 coordinates FAD; sequence FCLTEPSSGS. Residue Cys-237 is modified to S-nitrosocysteine. At Lys-239 the chain carries N6-acetyllysine; alternate. Lys-239 bears the N6-succinyllysine; alternate mark. 249 to 251 is an FAD binding site; sequence WIS. N6-acetyllysine; alternate occurs at positions 276 and 278. N6-succinyllysine; alternate is present on residues Lys-276 and Lys-278. At Lys-298 the chain carries N6-acetyllysine. An N6-acetyllysine; alternate modification is found at Lys-331. The residue at position 331 (Lys-331) is an N6-succinyllysine; alternate. Lys-372 carries the post-translational modification N6-succinyllysine. 461 to 463 provides a ligand contact to substrate; that stretch reads FEG. Catalysis depends on Glu-462, which acts as the Proton acceptor. 464–466 contacts FAD; the sequence is TND. Lys-482 is subject to N6-acetyllysine; alternate. Lys-482 carries the post-translational modification N6-succinyllysine; alternate. Residues 483-516 form a membrane-anchoring region; the sequence is ELSGLGSALKNPFGNAGLLLGEAGKQLRRRAGLG. A phosphoserine mark is found at Ser-517 and Ser-522. Lys-550 carries the post-translational modification N6-acetyllysine. Residue Lys-556 is modified to N6-acetyllysine; alternate. Residue Lys-556 is modified to N6-succinyllysine; alternate. Gln-562 lines the FAD pocket. N6-succinyllysine is present on Lys-639.

Belongs to the acyl-CoA dehydrogenase family. Homodimer. Homodimerizes after import into the mitochondrion. FAD serves as cofactor. In terms of processing, S-nitrosylation at Cys-237 in liver improves catalytic efficiency. As to expression, predominantly expressed in heart and skeletal muscle (at protein level). Also detected in kidney and liver (at protein level).

It localises to the mitochondrion inner membrane. The enzyme catalyses a very-long-chain 2,3-saturated fatty acyl-CoA + oxidized [electron-transfer flavoprotein] + H(+) = a very-long-chain (2E)-enoyl-CoA + reduced [electron-transfer flavoprotein]. The catalysed reaction is decanoyl-CoA + oxidized [electron-transfer flavoprotein] + H(+) = (2E)-decenoyl-CoA + reduced [electron-transfer flavoprotein]. It catalyses the reaction dodecanoyl-CoA + oxidized [electron-transfer flavoprotein] + H(+) = (2E)-dodecenoyl-CoA + reduced [electron-transfer flavoprotein]. It carries out the reaction tetradecanoyl-CoA + oxidized [electron-transfer flavoprotein] + H(+) = (2E)-tetradecenoyl-CoA + reduced [electron-transfer flavoprotein]. The enzyme catalyses oxidized [electron-transfer flavoprotein] + hexadecanoyl-CoA + H(+) = (2E)-hexadecenoyl-CoA + reduced [electron-transfer flavoprotein]. The catalysed reaction is octadecanoyl-CoA + oxidized [electron-transfer flavoprotein] + H(+) = (2E)-octadecenoyl-CoA + reduced [electron-transfer flavoprotein]. It catalyses the reaction eicosanoyl-CoA + oxidized [electron-transfer flavoprotein] + H(+) = (2E)-eicosenoyl-CoA + reduced [electron-transfer flavoprotein]. It carries out the reaction docosanoyl-CoA + oxidized [electron-transfer flavoprotein] + H(+) = (2E)-docosenoyl-CoA + reduced [electron-transfer flavoprotein]. The enzyme catalyses tetracosanoyl-CoA + oxidized [electron-transfer flavoprotein] + H(+) = (2E)-tetracosenoyl-CoA + reduced [electron-transfer flavoprotein]. The catalysed reaction is (9Z)-hexadecenoyl-CoA + oxidized [electron-transfer flavoprotein] + H(+) = (2E,9Z)-hexadecadienoyl-CoA + reduced [electron-transfer flavoprotein]. It catalyses the reaction oxidized [electron-transfer flavoprotein] + (9Z)-octadecenoyl-CoA + H(+) = (2E,9Z)-octadecadienoyl-CoA + reduced [electron-transfer flavoprotein]. It participates in lipid metabolism; mitochondrial fatty acid beta-oxidation. In terms of biological role, very long-chain specific acyl-CoA dehydrogenase is one of the acyl-CoA dehydrogenases that catalyze the first step of mitochondrial fatty acid beta-oxidation, an aerobic process breaking down fatty acids into acetyl-CoA and allowing the production of energy from fats. The first step of fatty acid beta-oxidation consists in the removal of one hydrogen from C-2 and C-3 of the straight-chain fatty acyl-CoA thioester, resulting in the formation of trans-2-enoyl-CoA. Among the different mitochondrial acyl-CoA dehydrogenases, very long-chain specific acyl-CoA dehydrogenase acts specifically on acyl-CoAs with saturated 12 to 24 carbons long primary chains. The chain is Very long-chain specific acyl-CoA dehydrogenase, mitochondrial from Homo sapiens (Human).